Here is a 476-residue protein sequence, read N- to C-terminus: Efflux pump atB (476 aa).

The disordered stretch occupies residues 1–38; sequence MAPQLAGSSHSSSASDQAHRQSSDPALESGSDTHVGSI. A run of 10 helical transmembrane segments spans residues 69–89, 96–116, 127–147, 186–206, 264–284, 294–314, 347–367, 372–392, 403–425, and 440–460; these read LIVA…LAPL, KPVY…CAVA, FFNG…VGDL, WSFY…SLLV, LLLC…FGAF, FNLW…IIGI, LPPA…FAWT, VHWI…IMIF, YPLY…AAAF, and WAGF…YIFY.

Belongs to the major facilitator superfamily.

The protein resides in the cell membrane. Efflux pump that might be required for efficient secretion of terreic acid. This is Efflux pump atB from Aspergillus terreus (strain NIH 2624 / FGSC A1156).